The chain runs to 325 residues: Gibberellin 20-oxidase-like protein (325 aa).

Positions 152–266 (CHGYFRINNY…RFSLAFFWCF (115 aa)) constitute a Fe2OG dioxygenase domain. Histidine 186, aspartate 188, and histidine 244 together coordinate Fe cation. Position 257 (arginine 257) interacts with 2-oxoglutarate.

This sequence belongs to the iron/ascorbate-dependent oxidoreductase family. GA20OX subfamily. Requires Fe(2+) as cofactor. As to expression, highly expressed in elongation zone of lateral roots.

Negative regulator of root hair growth. The protein is Gibberellin 20-oxidase-like protein of Arabidopsis thaliana (Mouse-ear cress).